Consider the following 393-residue polypeptide: Alpha-1,2 mannosyltransferase KTR1 (393 aa).

Residues 1–16 (MAKIMIPASKQPVYKK) lie on the Cytoplasmic side of the membrane. The chain crosses the membrane as a helical; Signal-anchor for type II membrane protein span at residues 17 to 34 (LGLLLVAVFTVYVFFHGA). The tract at residues 35–68 (QYARGSAPSPKYSTVLSSGSGYKYSKVELPKYTG) is stem region. The Lumenal portion of the chain corresponds to 35–393 (QYARGSAPSP…KPAGWQNHIG (359 aa)). Residues 69–393 (PREKATFVTL…KPAGWQNHIG (325 aa)) form a catalytic region. An N-linked (GlcNAc...) asparagine glycan is attached at Asn-120. Glu-280 (nucleophile) is an active-site residue.

It belongs to the glycosyltransferase 15 family. Mn(2+) is required as a cofactor. Post-translationally, N-glycosylated.

The protein resides in the golgi apparatus membrane. It participates in protein modification; protein glycosylation. In terms of biological role, mannosyltransferase that transfers a mannose residue from GDP-mannose to a range of acceptors in vitro, forming an alpha-(1-&gt;2)-D-mannosyl-D-mannose linkage. This is Alpha-1,2 mannosyltransferase KTR1 (KTR1) from Saccharomyces cerevisiae (strain ATCC 204508 / S288c) (Baker's yeast).